A 727-amino-acid polypeptide reads, in one-letter code: Elongation factor 2 (727 aa).

One can recognise a tr-type G domain in the interval 19-260; it reads DQIRNMGICA…MAITHLPNPL (242 aa). Residues 28–35, 94–98, and 148–151 contribute to the GTP site; these read AHIDHGKT, DTPGH, and NKVD. At His603 the chain carries Diphthamide.

The protein belongs to the TRAFAC class translation factor GTPase superfamily. Classic translation factor GTPase family. EF-G/EF-2 subfamily.

The protein localises to the cytoplasm. Catalyzes the GTP-dependent ribosomal translocation step during translation elongation. During this step, the ribosome changes from the pre-translocational (PRE) to the post-translocational (POST) state as the newly formed A-site-bound peptidyl-tRNA and P-site-bound deacylated tRNA move to the P and E sites, respectively. Catalyzes the coordinated movement of the two tRNA molecules, the mRNA and conformational changes in the ribosome. This chain is Elongation factor 2, found in Methanococcus maripaludis (strain C6 / ATCC BAA-1332).